The primary structure comprises 67 residues: Large ribosomal subunit protein bL35 (67 aa).

A compositionally biased stretch (basic residues) spans 1-16 (MPKMKTKSSAKKRFRV). Residues 1-23 (MPKMKTKSSAKKRFRVRPGGTVK) form a disordered region.

Belongs to the bacterial ribosomal protein bL35 family.

The polypeptide is Large ribosomal subunit protein bL35 (Variovorax paradoxus (strain S110)).